Here is an 882-residue protein sequence, read N- to C-terminus: DNA mismatch repair protein MutS (882 aa).

The tract at residues 1–22 (MTLPSDFPLEPPATNKDPHRDY) is disordered. 662–669 (GPNASGKS) provides a ligand contact to ATP.

It belongs to the DNA mismatch repair MutS family.

In terms of biological role, this protein is involved in the repair of mismatches in DNA. It is possible that it carries out the mismatch recognition step. This protein has a weak ATPase activity. The sequence is that of DNA mismatch repair protein MutS from Microcystis aeruginosa (strain NIES-843 / IAM M-2473).